A 408-amino-acid polypeptide reads, in one-letter code: MVVLALTLLVGSVAVFSLGSLLWVVGKHFWTEHIPEGITHPWRLRILSCLFHLTMTWGMIFEKLGLCYAPQFASFLHDLKPLKRDPDVVVKDLHFGTIPVKLYKPKKPSSIPRLGIIFFHGGGTIIGSLRTHNSICLRLSKECDSVVVSVGYRKSPMYKYPVMKDDCVVATTHFLESLDVYGVDPARVVTCGDSVGGTAATVTSQMLVHRPDLPRIKAQILIYPLLQLIDFGSPSYQQNRNIPLLSWDLAFYCFCCHLDVNISWKSVVKNGMHLPPDVWEKYRKWLGAENIPERFKNRGYKSIPWGPVNNDAYQEIKRSLNYTCSPLISEDSIVSQLPETCIVSCEYDLLRDHSLLYKKRLEDLGVPVTWHHMEDGFHGVLSALDYGLLSFPCASRIMDLIIQFIRKF.

Helical transmembrane passes span 2-22 (VVLA…GSLL), 46-66 (ILSC…KLGL), and 109-129 (SSIP…IGSL). An Involved in the stabilization of the negatively charged intermediate by the formation of the oxyanion hole motif is present at residues 120–122 (HGG). Residue Ser-194 is part of the active site. Asn-321 carries an N-linked (GlcNAc...) asparagine glycan. Catalysis depends on residues Asp-348 and His-378.

The protein belongs to the 'GDXG' lipolytic enzyme family.

The protein localises to the membrane. This is Arylacetamide deacetylase-like 3 (Aadacl3) from Mus musculus (Mouse).